Consider the following 153-residue polypeptide: 3-hydroxyacyl-[acyl-carrier-protein] dehydratase FabZ (153 aa).

The active site involves H54.

It belongs to the thioester dehydratase family. FabZ subfamily.

The protein resides in the cytoplasm. The catalysed reaction is a (3R)-hydroxyacyl-[ACP] = a (2E)-enoyl-[ACP] + H2O. Its function is as follows. Involved in unsaturated fatty acids biosynthesis. Catalyzes the dehydration of short chain beta-hydroxyacyl-ACPs and long chain saturated and unsaturated beta-hydroxyacyl-ACPs. The sequence is that of 3-hydroxyacyl-[acyl-carrier-protein] dehydratase FabZ from Chlamydia trachomatis serovar L2 (strain ATCC VR-902B / DSM 19102 / 434/Bu).